The sequence spans 416 residues: Histidine--tRNA ligase (416 aa).

Belongs to the class-II aminoacyl-tRNA synthetase family.

It localises to the cytoplasm. The catalysed reaction is tRNA(His) + L-histidine + ATP = L-histidyl-tRNA(His) + AMP + diphosphate + H(+). The polypeptide is Histidine--tRNA ligase (Methanococcus maripaludis (strain DSM 14266 / JCM 13030 / NBRC 101832 / S2 / LL)).